We begin with the raw amino-acid sequence, 225 residues long: 2-phytyl-1,4-naphtoquinone methyltransferase (225 aa).

This sequence belongs to the class I-like SAM-binding methyltransferase superfamily. MenG/UbiE family.

It carries out the reaction demethylphylloquinol + S-adenosyl-L-methionine = phylloquinol + S-adenosyl-L-homocysteine + H(+). It functions in the pathway cofactor biosynthesis; phylloquinone biosynthesis. Its function is as follows. Methyltransferase required for the conversion of 2-phytyl-1,4-beta-naphthoquinol to phylloquinol. The sequence is that of 2-phytyl-1,4-naphtoquinone methyltransferase from Thermosynechococcus vestitus (strain NIES-2133 / IAM M-273 / BP-1).